A 198-amino-acid polypeptide reads, in one-letter code: Holliday junction branch migration complex subunit RuvA (198 aa).

The domain I stretch occupies residues 1–63; that stretch reads MYDYIKGQLT…EDAQLLFGFH (63 aa). The tract at residues 64-142 is domain II; sequence SEEEKDVFLK…EAPKEESSKP (79 aa). The interval 143–147 is flexible linker; it reads PKAKQ. The tract at residues 148–198 is domain III; it reads QGNEQLDEAVEALLALGYKATELKKIRAFFEGTSETAEQYIKSALKMLMKG.

This sequence belongs to the RuvA family. Homotetramer. Forms an RuvA(8)-RuvB(12)-Holliday junction (HJ) complex. HJ DNA is sandwiched between 2 RuvA tetramers; dsDNA enters through RuvA and exits via RuvB. An RuvB hexamer assembles on each DNA strand where it exits the tetramer. Each RuvB hexamer is contacted by two RuvA subunits (via domain III) on 2 adjacent RuvB subunits; this complex drives branch migration. In the full resolvosome a probable DNA-RuvA(4)-RuvB(12)-RuvC(2) complex forms which resolves the HJ.

The protein localises to the cytoplasm. Its function is as follows. The RuvA-RuvB-RuvC complex processes Holliday junction (HJ) DNA during genetic recombination and DNA repair, while the RuvA-RuvB complex plays an important role in the rescue of blocked DNA replication forks via replication fork reversal (RFR). RuvA specifically binds to HJ cruciform DNA, conferring on it an open structure. The RuvB hexamer acts as an ATP-dependent pump, pulling dsDNA into and through the RuvAB complex. HJ branch migration allows RuvC to scan DNA until it finds its consensus sequence, where it cleaves and resolves the cruciform DNA. The chain is Holliday junction branch migration complex subunit RuvA from Streptococcus equi subsp. equi (strain 4047).